Consider the following 623-residue polypeptide: tRNA uridine 5-carboxymethylaminomethyl modification enzyme MnmG (623 aa).

12–17 (GAGHAG) contacts FAD. 272–286 (GPRYCPSIEDKINRF) contacts NAD(+).

The protein belongs to the MnmG family. In terms of assembly, homodimer. Heterotetramer of two MnmE and two MnmG subunits. It depends on FAD as a cofactor.

The protein localises to the cytoplasm. In terms of biological role, NAD-binding protein involved in the addition of a carboxymethylaminomethyl (cmnm) group at the wobble position (U34) of certain tRNAs, forming tRNA-cmnm(5)s(2)U34. The sequence is that of tRNA uridine 5-carboxymethylaminomethyl modification enzyme MnmG from Flavobacterium johnsoniae (strain ATCC 17061 / DSM 2064 / JCM 8514 / BCRC 14874 / CCUG 350202 / NBRC 14942 / NCIMB 11054 / UW101) (Cytophaga johnsonae).